The following is a 620-amino-acid chain: Chaperone protein HscA homolog (620 aa).

It belongs to the heat shock protein 70 family.

Functionally, chaperone involved in the maturation of iron-sulfur cluster-containing proteins. Has a low intrinsic ATPase activity which is markedly stimulated by HscB. This is Chaperone protein HscA homolog from Shewanella sp. (strain MR-7).